A 167-amino-acid polypeptide reads, in one-letter code: cAMP-dependent protein kinase type I-alpha regulatory subunit (167 aa).

Phosphothreonine is present on Thr-12. Residues Ser-14 and Ser-20 each carry the phosphoserine modification. The Pseudophosphorylation motif signature appears at 30–33; that stretch reads RGAI. Residue Ser-34 is modified to Phosphoserine. Residues 51-78, 79-167, Glu-147, and Arg-156 contribute to the 3',5'-cyclic AMP site; these read LFSHLDDNERILMGSTLRMYEEFLSKVS and ILES…ILKR. Residue Ser-82 is modified to Phosphoserine.

The protein belongs to the cAMP-dependent kinase regulatory chain family. As to quaternary structure, the inactive holoenzyme is composed of two regulatory chains and two catalytic chains. Activation by cAMP releases the two active catalytic monomers and the regulatory dimer. Interacts with PRKACA and PRKACB. PRKAR1A also interacts with RFC2; the complex may be involved in cell survival. Interacts with AKAP4. Interacts with RARA; the interaction occurs in the presence of cAMP or FSH and regulates RARA transcriptional activity. Interacts with the phosphorylated form of PJA2. Interacts with CBFA2T3. Interacts with PRKX; regulates this cAMP-dependent protein kinase. Interacts with smAKAP; this interaction may target PRKAR1A to the plasma membrane. Interacts with AICDA. The pseudophosphorylation site binds to the substrate-binding region of the catalytic chain, resulting in the inhibition of its activity.

Its subcellular location is the cell membrane. In terms of biological role, regulatory subunit of the cAMP-dependent protein kinases involved in cAMP signaling in cells. In Mesocricetus auratus (Golden hamster), this protein is cAMP-dependent protein kinase type I-alpha regulatory subunit.